Here is a 281-residue protein sequence, read N- to C-terminus: Pantothenate synthetase (281 aa).

30 to 37 (MGALHHGH) contributes to the ATP binding site. The active-site Proton donor is His37. Gln61 lines the (R)-pantoate pocket. Gln61 provides a ligand contact to beta-alanine. 147–150 (GEKD) is a binding site for ATP. Gln153 contributes to the (R)-pantoate binding site. Residues Leu176 and 184-187 (SSSR) each bind ATP.

Belongs to the pantothenate synthetase family. Homodimer.

It localises to the cytoplasm. The enzyme catalyses (R)-pantoate + beta-alanine + ATP = (R)-pantothenate + AMP + diphosphate + H(+). It participates in cofactor biosynthesis; (R)-pantothenate biosynthesis; (R)-pantothenate from (R)-pantoate and beta-alanine: step 1/1. Its function is as follows. Catalyzes the condensation of pantoate with beta-alanine in an ATP-dependent reaction via a pantoyl-adenylate intermediate. This chain is Pantothenate synthetase, found in Bartonella bacilliformis (strain ATCC 35685 / KC583 / Herrer 020/F12,63).